The sequence spans 356 residues: sn-glycerol-3-phosphate import ATP-binding protein UgpC (356 aa).

Residues 4–235 (LKLQAVTKSW…PASRFVASFI (232 aa)) enclose the ABC transporter domain. 37 to 44 (GPSGCGKS) is an ATP binding site.

The protein belongs to the ABC transporter superfamily. sn-glycerol-3-phosphate importer (TC 3.A.1.1.3) family. The complex is composed of two ATP-binding proteins (UgpC), two transmembrane proteins (UgpA and UgpE) and a solute-binding protein (UgpB).

It is found in the cell inner membrane. It catalyses the reaction sn-glycerol 3-phosphate(out) + ATP + H2O = sn-glycerol 3-phosphate(in) + ADP + phosphate + H(+). In terms of biological role, part of the ABC transporter complex UgpBAEC involved in sn-glycerol-3-phosphate (G3P) import. Responsible for energy coupling to the transport system. The protein is sn-glycerol-3-phosphate import ATP-binding protein UgpC of Salmonella choleraesuis (strain SC-B67).